Reading from the N-terminus, the 157-residue chain is Putative dehydration-responsive element-binding protein 2H (157 aa).

Positions 5 to 21 (RKSRGTRDVAEILRKWR) match the Nuclear localization signal motif. The tract at residues 29 to 57 (ADSCIDGGGSKPIRKAPPKRSRKGCMKGK) is disordered. Residues 40-54 (PIRKAPPKRSRKGCM) show a composition bias toward basic residues. The AP2/ERF DNA-binding region spans 66 to 123 (DYTGVRQRTWGKWVAEIREPGRGAKLWLGTFSSSYEAALAYDEASKAIYGQSARLNLP).

Belongs to the AP2/ERF transcription factor family. ERF subfamily.

It localises to the nucleus. Functionally, putative transcriptional activator that binds specifically to the DNA sequence 5'-[AG]CCGAC-3'. The sequence is that of Putative dehydration-responsive element-binding protein 2H (DREB2H) from Arabidopsis thaliana (Mouse-ear cress).